We begin with the raw amino-acid sequence, 214 residues long: Adenylate kinase (214 aa).

10–15 serves as a coordination point for ATP; it reads GAGKGT. The interval 30–59 is NMP; that stretch reads STGDMLRAAVKAQTPVGLKAKAVMDRGELV. AMP contacts are provided by residues Thr-31, Arg-36, 57–59, 85–88, and Gln-92; these read ELV and GYPR. Residues 126 to 163 are LID; the sequence is GRFTCAKCGTGYHDRHKQPAREGVCDVCGSTEFKRRPD. Arg-127 is an ATP binding site. 4 residues coordinate Zn(2+): Cys-130, Cys-133, Cys-150, and Cys-153. Residues Arg-160 and Arg-172 each contribute to the AMP site. Gly-200 is a binding site for ATP.

It belongs to the adenylate kinase family. In terms of assembly, monomer.

It localises to the cytoplasm. It catalyses the reaction AMP + ATP = 2 ADP. It functions in the pathway purine metabolism; AMP biosynthesis via salvage pathway; AMP from ADP: step 1/1. Its function is as follows. Catalyzes the reversible transfer of the terminal phosphate group between ATP and AMP. Plays an important role in cellular energy homeostasis and in adenine nucleotide metabolism. The polypeptide is Adenylate kinase (Erythrobacter litoralis (strain HTCC2594)).